The sequence spans 254 residues: Alcohol dehydrogenase (254 aa).

Phe10–Leu33 is an NAD(+) binding site. Ser138 contributes to the substrate binding site. Tyr151 acts as the Proton acceptor in catalysis.

The protein belongs to the short-chain dehydrogenases/reductases (SDR) family. Homodimer.

The enzyme catalyses a primary alcohol + NAD(+) = an aldehyde + NADH + H(+). It carries out the reaction a secondary alcohol + NAD(+) = a ketone + NADH + H(+). The polypeptide is Alcohol dehydrogenase (Adh) (Drosophila madeirensis (Fruit fly)).